Here is a 396-residue protein sequence, read N- to C-terminus: Elongation factor Tu (396 aa).

One can recognise a tr-type G domain in the interval 10–206 (KPHCNIGTIG…EVDAYIPQPE (197 aa)). The tract at residues 19–26 (GHVDHGKT) is G1. 19-26 (GHVDHGKT) is a GTP binding site. Mg(2+) is bound at residue Thr-26. Positions 60–64 (GITIS) are G2. The tract at residues 81–84 (DCPG) is G3. GTP is bound by residues 81 to 85 (DCPGH) and 136 to 139 (NKCD). The segment at 136–139 (NKCD) is G4. Residues 174 to 176 (SAL) form a G5 region.

Belongs to the TRAFAC class translation factor GTPase superfamily. Classic translation factor GTPase family. EF-Tu/EF-1A subfamily. In terms of assembly, monomer.

Its subcellular location is the cytoplasm. It catalyses the reaction GTP + H2O = GDP + phosphate + H(+). Its function is as follows. GTP hydrolase that promotes the GTP-dependent binding of aminoacyl-tRNA to the A-site of ribosomes during protein biosynthesis. The chain is Elongation factor Tu from Paramagnetospirillum magneticum (strain ATCC 700264 / AMB-1) (Magnetospirillum magneticum).